Reading from the N-terminus, the 200-residue chain is NADH-quinone oxidoreductase subunit C (200 aa).

Belongs to the complex I 30 kDa subunit family. In terms of assembly, NDH-1 is composed of 14 different subunits. Subunits NuoB, C, D, E, F, and G constitute the peripheral sector of the complex.

Its subcellular location is the cell inner membrane. It catalyses the reaction a quinone + NADH + 5 H(+)(in) = a quinol + NAD(+) + 4 H(+)(out). NDH-1 shuttles electrons from NADH, via FMN and iron-sulfur (Fe-S) centers, to quinones in the respiratory chain. The immediate electron acceptor for the enzyme in this species is believed to be ubiquinone. Couples the redox reaction to proton translocation (for every two electrons transferred, four hydrogen ions are translocated across the cytoplasmic membrane), and thus conserves the redox energy in a proton gradient. In Rhizobium johnstonii (strain DSM 114642 / LMG 32736 / 3841) (Rhizobium leguminosarum bv. viciae), this protein is NADH-quinone oxidoreductase subunit C.